The following is a 140-amino-acid chain: uncharacterized protein (140 aa).

Over residues 1–15 the composition is skewed to basic and acidic residues; the sequence is MQRQTGHMEDKKRTG. Residues 1–34 are disordered; sequence MQRQTGHMEDKKRTGLESQGTENAFSDGRDGKDG.

This is an uncharacterized protein from Gallus gallus (Chicken).